The primary structure comprises 516 residues: GMP synthase [glutamine-hydrolyzing] (516 aa).

Residues 8–198 enclose the Glutamine amidotransferase type-1 domain; sequence KILILDFGSQ…VVNICGCDTL (191 aa). C84 acts as the Nucleophile in catalysis. Residues H172 and E174 contribute to the active site. The GMPS ATP-PPase domain occupies 199 to 391; sequence WNIENIIEND…LGLPYNMLYR (193 aa). 226–232 lines the ATP pocket; that stretch reads SGGVDSS.

As to quaternary structure, homodimer.

The catalysed reaction is XMP + L-glutamine + ATP + H2O = GMP + L-glutamate + AMP + diphosphate + 2 H(+). Its pathway is purine metabolism; GMP biosynthesis; GMP from XMP (L-Gln route): step 1/1. In terms of biological role, catalyzes the synthesis of GMP from XMP. This chain is GMP synthase [glutamine-hydrolyzing], found in Francisella tularensis subsp. tularensis (strain WY96-3418).